A 368-amino-acid chain; its full sequence is tRNA-specific 2-thiouridylase MnmA (368 aa).

Residues 6 to 13 (ALSGGVDS) and M32 contribute to the ATP site. The active-site Nucleophile is the C92. C92 and C186 form a disulfide bridge. G116 contacts ATP. An interaction with tRNA region spans residues 134 to 136 (KDQ). The active-site Cysteine persulfide intermediate is the C186. Positions 292–293 (RY) are interaction with tRNA.

The protein belongs to the MnmA/TRMU family.

The protein resides in the cytoplasm. The catalysed reaction is S-sulfanyl-L-cysteinyl-[protein] + uridine(34) in tRNA + AH2 + ATP = 2-thiouridine(34) in tRNA + L-cysteinyl-[protein] + A + AMP + diphosphate + H(+). Catalyzes the 2-thiolation of uridine at the wobble position (U34) of tRNA, leading to the formation of s(2)U34. This chain is tRNA-specific 2-thiouridylase MnmA, found in Campylobacter hominis (strain ATCC BAA-381 / DSM 21671 / CCUG 45161 / LMG 19568 / NCTC 13146 / CH001A).